The primary structure comprises 268 residues: Secreted RxLR effector protein 5 (268 aa).

The N-terminal stretch at 1-21 (MRGAFYMAITLFLARSRSATA) is a signal peptide. The RxLR-dEER motif lies at 48–63 (RYLRDGLALSAANEER). N-linked (GlcNAc...) asparagine glycosylation occurs at N104.

Belongs to the RxLR effector family.

The protein localises to the secreted. It is found in the host nucleus. Effector that acts as a broad suppressor of cell death to interrupt plant immunity. Inhibits cell death induced by cell death-inducing proteins, including the PAMP elicitor INF1 from P.infestans. This Plasmopara viticola (Downy mildew of grapevine) protein is Secreted RxLR effector protein 5.